Consider the following 520-residue polypeptide: Sterile alpha motif domain-containing protein 3 (520 aa).

Residues 4–71 enclose the SAM domain; it reads WSVEQVCSWL…KYKQNTQGLK (68 aa). The segment at 85 to 114 is disordered; that stretch reads TEAARDYRDEESSSPARHGEQMPSFYPAEN.

This Homo sapiens (Human) protein is Sterile alpha motif domain-containing protein 3 (SAMD3).